Consider the following 541-residue polypeptide: Chaperonin GroEL (541 aa).

ATP-binding positions include 29–32, 86–90, Gly413, 478–480, and Asp494; these read TLGP, DGTTT, and DAL.

It belongs to the chaperonin (HSP60) family. As to quaternary structure, forms a cylinder of 14 subunits composed of two heptameric rings stacked back-to-back. Interacts with the co-chaperonin GroES.

Its subcellular location is the cytoplasm. It carries out the reaction ATP + H2O + a folded polypeptide = ADP + phosphate + an unfolded polypeptide.. In terms of biological role, together with its co-chaperonin GroES, plays an essential role in assisting protein folding. The GroEL-GroES system forms a nano-cage that allows encapsulation of the non-native substrate proteins and provides a physical environment optimized to promote and accelerate protein folding. The sequence is that of Chaperonin GroEL from Alkaliphilus oremlandii (strain OhILAs) (Clostridium oremlandii (strain OhILAs)).